The primary structure comprises 369 residues: Anhydro-N-acetylmuramic acid kinase (369 aa).

ATP is bound at residue 12–19; the sequence is GTSMDGVD.

Belongs to the anhydro-N-acetylmuramic acid kinase family.

It catalyses the reaction 1,6-anhydro-N-acetyl-beta-muramate + ATP + H2O = N-acetyl-D-muramate 6-phosphate + ADP + H(+). It functions in the pathway amino-sugar metabolism; 1,6-anhydro-N-acetylmuramate degradation. The protein operates within cell wall biogenesis; peptidoglycan recycling. Functionally, catalyzes the specific phosphorylation of 1,6-anhydro-N-acetylmuramic acid (anhMurNAc) with the simultaneous cleavage of the 1,6-anhydro ring, generating MurNAc-6-P. Is required for the utilization of anhMurNAc either imported from the medium or derived from its own cell wall murein, and thus plays a role in cell wall recycling. The polypeptide is Anhydro-N-acetylmuramic acid kinase (Shewanella baltica (strain OS223)).